A 126-amino-acid polypeptide reads, in one-letter code: Large ribosomal subunit protein bL12 (126 aa).

It belongs to the bacterial ribosomal protein bL12 family. Homodimer. Part of the ribosomal stalk of the 50S ribosomal subunit. Forms a multimeric L10(L12)X complex, where L10 forms an elongated spine to which 2 to 4 L12 dimers bind in a sequential fashion. Binds GTP-bound translation factors.

In terms of biological role, forms part of the ribosomal stalk which helps the ribosome interact with GTP-bound translation factors. Is thus essential for accurate translation. This chain is Large ribosomal subunit protein bL12, found in Caulobacter sp. (strain K31).